A 275-amino-acid polypeptide reads, in one-letter code: Arylalkylamine N-acetyltransferase 1 (275 aa).

Acetyl-CoA-binding positions include 181–183 (LSV) and 189–193 (GLGIA). One can recognise an N-acetyltransferase domain in the interval 181-254 (LSVDTNYRGL…GEVVFKPAAP (74 aa)).

This sequence belongs to the acetyltransferase family. AANAT subfamily. In the adult, expressed in the midgut portion of the thoracic segments and the frontal half of the abdomen (at protein level). Expressed in the epithelial cell layer facing the lumen of the gut (at protein level). In the brain, expressed in a sub-populations of neurons and astrocytes, and in a set of distinct stripes in the optic lobes (at protein level). Expressed mainly in serotonergic neurons but also in subsets of glutamatergic, GABAergic and cholinergic neurons (at protein level).

It is found in the cytoplasm. Its subcellular location is the nucleus. The catalysed reaction is a 2-arylethylamine + acetyl-CoA = an N-acetyl-2-arylethylamine + CoA + H(+). The enzyme catalyses serotonin + acetyl-CoA = N-acetylserotonin + CoA + H(+). It catalyses the reaction dopamine + acetyl-CoA = N-acetyldopamine + CoA + H(+). It carries out the reaction tyramine + acetyl-CoA = N-acetyltyramine + CoA + H(+). The catalysed reaction is octopamine + acetyl-CoA = N-acetyloctopamine + CoA + H(+). The enzyme catalyses 5-methoxytryptamine + acetyl-CoA = melatonin + CoA + H(+). It catalyses the reaction 2-phenylethylamine + acetyl-CoA = N-(2-phenylethyl)acetamide + CoA + H(+). It carries out the reaction noradrenaline + acetyl-CoA = N-acetylnoradrenaline + CoA + H(+). The catalysed reaction is tyramine + butanoyl-CoA = N-butanoyltyramine + CoA + H(+). The enzyme catalyses tyramine + hexanoyl-CoA = N-hexanoyltyramine + CoA + H(+). It catalyses the reaction tryptamine + acetyl-CoA = N-acetyltryptamine + CoA + H(+). It carries out the reaction dopamine + hexadecanoyl-CoA = N-hexadecanoyl-dopamine + CoA + H(+). The catalysed reaction is dopamine + (9Z)-octadecenoyl-CoA = N-(9Z-octadecanoyl)-dopamine + CoA + H(+). The enzyme catalyses serotonin + hexadecanoyl-CoA = N-hexadecanoyl-serotonin + CoA + H(+). It catalyses the reaction serotonin + (9Z)-octadecenoyl-CoA = N-(9Z-octadecenoyl)-serotonin + CoA + H(+). It carries out the reaction serotonin + octadecanoyl-CoA = N-octadecanoyl-serotonin + CoA + H(+). The catalysed reaction is serotonin + (5Z,8Z,11Z,14Z)-eicosatetraenoyl-CoA = N-[(5Z,8Z,11Z,14Z)-eicosatetraenoyl]-serotonin + CoA + H(+). The protein operates within aromatic compound metabolism; melatonin biosynthesis; melatonin from serotonin: step 1/2. With respect to regulation, inhibited by long-chain acyl-CoA thioesters, oleoyl-CoA (an analog of acetyl-CoA) and tyrosol (an analog of tyramine). Functionally, catalyzes N-acetylation of tryptamine, tyramine, dopamine, serotonin and octopamine. In astrocytes, regulates sleep homeostasis by limiting the accumulation of serotonin and dopamine in the brain upon sleep deprivation. Is not essential for sclerotization. This chain is Arylalkylamine N-acetyltransferase 1, found in Drosophila melanogaster (Fruit fly).